A 249-amino-acid chain; its full sequence is Major phosphate-irrepressible acid phosphatase (249 aa).

Residues 1–20 (MKKNIIAGCLFSLFSLSALA) form the signal peptide.

This sequence belongs to the class A bacterial acid phosphatase family. As to quaternary structure, homotetramer.

The protein localises to the periplasm. The catalysed reaction is a phosphate monoester + H2O = an alcohol + phosphate. This is Major phosphate-irrepressible acid phosphatase (phoC) from Morganella morganii (Proteus morganii).